Here is a 511-residue protein sequence, read N- to C-terminus: ATP synthase subunit alpha (511 aa).

Residue 169–176 (GDRQTGKT) participates in ATP binding.

This sequence belongs to the ATPase alpha/beta chains family. F-type ATPases have 2 components, CF(1) - the catalytic core - and CF(0) - the membrane proton channel. CF(1) has five subunits: alpha(3), beta(3), gamma(1), delta(1), epsilon(1). CF(0) has three main subunits: a(1), b(2) and c(9-12). The alpha and beta chains form an alternating ring which encloses part of the gamma chain. CF(1) is attached to CF(0) by a central stalk formed by the gamma and epsilon chains, while a peripheral stalk is formed by the delta and b chains.

The protein resides in the cell inner membrane. It carries out the reaction ATP + H2O + 4 H(+)(in) = ADP + phosphate + 5 H(+)(out). Functionally, produces ATP from ADP in the presence of a proton gradient across the membrane. The alpha chain is a regulatory subunit. The sequence is that of ATP synthase subunit alpha from Bartonella bacilliformis (strain ATCC 35685 / KC583 / Herrer 020/F12,63).